The following is a 102-amino-acid chain: Small ribosomal subunit protein uS10 (102 aa).

The segment at Gln-34–Lys-59 is disordered.

It belongs to the universal ribosomal protein uS10 family. As to quaternary structure, part of the 30S ribosomal subunit.

In terms of biological role, involved in the binding of tRNA to the ribosomes. The polypeptide is Small ribosomal subunit protein uS10 (Methanopyrus kandleri (strain AV19 / DSM 6324 / JCM 9639 / NBRC 100938)).